The primary structure comprises 111 residues: MANIHQENEEMEQPMQNGEEDRPLGGGEGHQPAGNRRGQARRLAPNFRWAIPNRQINDGMGGDGDDMEIFMEEMREIRRKLRELQLRNCLRILMGELSNHHDHHDEFCLMP.

The segment at 1–63 (MANIHQENEE…RQINDGMGGD (63 aa)) is disordered. The tract at residues 68 to 93 (EIFMEEMREIRRKLRELQLRNCLRIL) is interaction with p75NTR/NGFR. The segment at 68–111 (EIFMEEMREIRRKLRELQLRNCLRILMGELSNHHDHHDEFCLMP) is interaction with 14-3-3 epsilon. Positions 77-87 (IRRKLRELQLR) match the Nuclear export signal motif. The his cluster stretch occupies residues 100–104 (HHDHH). Zn(2+) is bound at residue Cys-108.

This sequence belongs to the BEX family. As to quaternary structure, self-associates. Binds to the DEATH domain of p75NTR/NGFR. Interacts with 14-3-3 epsilon (YWHAE). Interacts with DIABLO/SMAC. In terms of processing, ubiquitinated. Degraded by the proteasome. Found in ovarian granulosa cells, testis, prostate and seminal vesicle tissue. High levels also detected in liver.

The protein localises to the nucleus. Its subcellular location is the cytoplasm. The protein resides in the cytosol. In terms of biological role, may be a signaling adapter molecule involved in NGFR/p75NTR-mediated apoptosis induced by NGF. Plays a role in zinc-triggered neuronal death. In absence of reductive stress, acts as a pseudosubstrate for the CRL2(FEM1B) complex: associates with FEM1B via zinc, thereby preventing association between FEM1B and its substrates. The chain is Protein BEX3 from Homo sapiens (Human).